The chain runs to 110 residues: Flagellar hook-basal body complex protein FliE (110 aa).

It belongs to the FliE family.

Its subcellular location is the bacterial flagellum basal body. This Pseudomonas entomophila (strain L48) protein is Flagellar hook-basal body complex protein FliE.